Consider the following 449-residue polypeptide: Nucleoprotein (449 aa).

A disordered region spans residues 1 to 55; that stretch reads MSFTPGKQSSSRASSGNRSGNGILKWADQSDQSRNVQTRGRRVQSKQTATSQQPS. Low complexity predominate over residues 9 to 22; the sequence is SSSRASSGNRSGNG. Polar residues-rich tracts occupy residues 29–38 and 45–55; these read QSDQSRNVQT and SKQTATSQQPS. The tract at residues 52–194 is RNA-binding; the sequence is QQPSGGTVVP…GYYIEGSGRS (143 aa). One can recognise a CoV N NTD domain in the interval 61-190; that stretch reads PYYSWFSGIT…VLPQGYYIEG (130 aa). RNA is bound by residues R106, R122, and R164. 3 disordered regions span residues 158 to 231, 266 to 297, and 387 to 449; these read PADI…VTPD, ILNKPRQKRSPNKQCTVQQCFGKRGPNQNFGG, and MMNI…TSEI. At S167 the chain carries Phosphoserine; by host. Residue T174 is modified to Phosphothreonine; by host. The residue at position 191 (S191) is a Phosphoserine; by host. Polar residues-rich tracts occupy residues 194–204 and 212–227; these read SAPNSRSTSRA and GSRSRANSGNRTSTPG. The CoV N CTD domain maps to 259 to 384; sequence AKEVRQKILN…QNLNAYQHQE (126 aa). The segment covering 266–276 has biased composition (basic residues); sequence ILNKPRQKRSP. A dimerization region spans residues 266–385; the sequence is ILNKPRQKRS…NLNAYQHQED (120 aa). Phosphoserine; by host is present on S391. A compositionally biased stretch (polar residues) spans 400–410; that stretch reads QKNGQVENDNI. The segment covering 423–440 has biased composition (basic and acidic residues); it reads KSRELTAEDISLLKKMDE. S424 carries the post-translational modification Phosphoserine; by host. Position 428 is a phosphothreonine; by host (T428).

Belongs to the betacoronavirus nucleocapsid protein family. As to quaternary structure, homooligomer. Both monomeric and oligomeric forms interact with RNA. Interacts with protein M. Interacts with NSP3; this interaction serves to tether the genome to the newly translated replicase-transcriptase complex at a very early stage of infection. Post-translationally, ADP-ribosylated. The ADP-ribosylation is retained in the virion during infection. Phosphorylated on serine and threonine residues.

The protein resides in the virion. It localises to the host endoplasmic reticulum-Golgi intermediate compartment. It is found in the host Golgi apparatus. In terms of biological role, packages the positive strand viral genome RNA into a helical ribonucleocapsid (RNP) and plays a fundamental role during virion assembly through its interactions with the viral genome and membrane protein M. Plays an important role in enhancing the efficiency of subgenomic viral RNA transcription as well as viral replication. The chain is Nucleoprotein from Sus scrofa (Pig).